The following is a 230-amino-acid chain: Acyl-protein thioesterase 1 (230 aa).

Catalysis depends on charge relay system residues Ser-119, Asp-174, and His-208. Residue Lys-224 is modified to N6-acetyllysine.

It belongs to the AB hydrolase superfamily. AB hydrolase 2 family. In terms of assembly, homodimer.

The protein localises to the cytoplasm. It is found in the cell membrane. Its subcellular location is the nucleus membrane. It localises to the endoplasmic reticulum. The enzyme catalyses S-hexadecanoyl-L-cysteinyl-[protein] + H2O = L-cysteinyl-[protein] + hexadecanoate + H(+). The catalysed reaction is 1-hexadecanoyl-sn-glycero-3-phosphocholine + H2O = sn-glycerol 3-phosphocholine + hexadecanoate + H(+). It carries out the reaction a 1-(9Z-octadecenoyl)-2-acyl-sn-glycero-3-phosphocholine + H2O = a 2-acyl-sn-glycero-3-phosphocholine + (9Z)-octadecenoate + H(+). Acts as an acyl-protein thioesterase. Hydrolyzes fatty acids from S-acylated cysteine residues in proteins such as trimeric G alpha proteins or HRAS. Acts as a palmitoyl thioesterase that catalyzes depalmitoylation of proteins, such as ADRB2, KCNMA1 and SQSTM1. Acts as a negative regulator of autophagy by mediating palmitoylation of SQSTM1, decreasing affinity between SQSTM1 and ATG8 proteins and recruitment of ubiquitinated cargo proteins to autophagosomes. Acts as a lysophospholipase and hydrolyzes lysophosphatidylcholine (lyso-PC). Also hydrolyzes lysophosphatidylethanolamine (lyso-PE), lysophosphatidylinositol (lyso-PI) and lysophosphatidylserine (lyso-PS). Has much higher thioesterase activity than lysophospholipase activity. Contributes to the production of lysophosphatidic acid (LPA) during blood coagulation by recognizing and cleaving plasma phospholipids to generate lysophospholipids which in turn act as substrates for ENPP2 to produce LPA. The chain is Acyl-protein thioesterase 1 (Lypla1) from Mus musculus (Mouse).